Reading from the N-terminus, the 507-residue chain is ATP synthase subunit alpha, chloroplastic (507 aa).

170 to 177 (GDRQTGKT) is an ATP binding site.

The protein belongs to the ATPase alpha/beta chains family. In terms of assembly, F-type ATPases have 2 components, CF(1) - the catalytic core - and CF(0) - the membrane proton channel. CF(1) has five subunits: alpha(3), beta(3), gamma(1), delta(1), epsilon(1). CF(0) has four main subunits: a, b, b' and c.

The protein localises to the plastid. It is found in the chloroplast thylakoid membrane. The enzyme catalyses ATP + H2O + 4 H(+)(in) = ADP + phosphate + 5 H(+)(out). Functionally, produces ATP from ADP in the presence of a proton gradient across the membrane. The alpha chain is a regulatory subunit. In Daucus carota (Wild carrot), this protein is ATP synthase subunit alpha, chloroplastic.